Consider the following 930-residue polypeptide: Protocadherin gamma-B6 (930 aa).

The signal sequence occupies residues 1-30 (MGGSCAQRRRAGPRQVLFPLLLPFFYPTLC). Cadherin domains lie at 31–133 (EPIR…APQF), 134–242 (DKKE…PPVF), 243–347 (SRDE…SPEI), 348–452 (IITS…APVF), 453–562 (DQTS…APRV), and 570–675 (DGSA…LPDL). Residues 31-691 (EPIRYSIPEE…SDPQAELQFY (661 aa)) lie on the Extracellular side of the membrane. 3 N-linked (GlcNAc...) asparagine glycosylation sites follow: Asn-304, Asn-419, and Asn-545. A helical membrane pass occupies residues 692–712 (LVVALALISVLFLLAVILAIA). The Cytoplasmic portion of the chain corresponds to 713 to 930 (LRLRRSLSPT…KKKSGKKEKK (218 aa)). Disordered stretches follow at residues 791–839 (PHGG…WPNN) and 900–930 (ATLTNAAGKRDGKAPAGGNGNKKKSGKKEKK). Positions 800–839 (HPETLTSQAPPNTDWRFSQAQRPGTSGSQNGDDTGTWPNN) are enriched in polar residues. The segment covering 920–930 (NKKKSGKKEKK) has biased composition (basic residues).

The protein localises to the cell membrane. Functionally, potential calcium-dependent cell-adhesion protein. May be involved in the establishment and maintenance of specific neuronal connections in the brain. The sequence is that of Protocadherin gamma-B6 (PCDHGB6) from Pan troglodytes (Chimpanzee).